We begin with the raw amino-acid sequence, 573 residues long: MSAFCLGLVGRASAPAEPDSACCMELPAAAGDAVRSPAAAAALIFPGGSGELELALEEELALLAAGERPSDPGEHPQAEPGSLAEGAGPQPPPSQDPELLSVIRQKEKDLVLAARLGKALLERNQDMSRQYEQMHKELTDKLEHLEQEKHELRRRFENREGEWEGRVSELESDVKQLQDELERQQIHLREADREKSRAVQELSEQNQRLLDQLSRASEVERQLSMQVHALREDFREKNSSTNQHIIRLESLQAEIKMLSDRKRELEHRLSATLEENDLLQGTVEELQDRVLILERQGHDKDLQLHQSQLELQEVRLSCRQLQVKVEELTEERSLQSSAATSTSLLSEIEQSMEAEELEQEREQLRLQLWEAYCQVRYLCSHLRGNDSADSAVSTDSSMDESSETSSAKDVPAGSLRTALNELKRLIQSIVDGMEPTVTLLSVEMTALKEERDRLRVTSEDKEPKEQLQKAIRDRDEAIAKKNAVELELAKCRMDMMSLNSQLLDAIQQKLNLSQQLEAWQDDMHRVIDRQLMDTHLKERSQPAAALCRGHSAGRGDEPSIAEGKRLFSFFRKI.

Positions 67-97 (ERPSDPGEHPQAEPGSLAEGAGPQPPPSQDP) are disordered. A compositionally biased stretch (basic and acidic residues) spans 68–77 (RPSDPGEHPQ). The CC1 box motif lies at 113–117 (AARLG). A coiled-coil region spans residues 118–376 (KALLERNQDM…QLWEAYCQVR (259 aa)). The segment at 386 to 412 (DSADSAVSTDSSMDESSETSSAKDVPA) is disordered. Positions 387 to 396 (SADSAVSTDS) are enriched in low complexity. Residues 440-525 (LSVEMTALKE…LEAWQDDMHR (86 aa)) are a coiled coil.

The protein belongs to the BICDR family. In terms of assembly, part of a tripartite complex with dynein and dynactin, acts an adapter linking the dynein motor complex and dynactin. Interacts with KIF1C. Interacts with RAB6A and RAB6B; interaction is specific to Rab6.

The protein resides in the cytoplasm. It is found in the cytoskeleton. Its subcellular location is the microtubule organizing center. It localises to the centrosome. Acts as an adapter protein linking the dynein motor complex to various cargos and converts dynein from a non-processive to a highly processive motor in the presence of dynactin. Facilitates the interaction between dynein and dynactin and activates dynein processivity (the ability to move along a microtubule for a long distance without falling off the track). Predominantly recruits 2 dyneins, which increases both the force and speed of the microtubule motor. Component of secretory vesicle machinery in developing neurons that acts as a regulator of neurite outgrowth. Regulates the secretory vesicle transport by controlling the accumulation of Rab6-containing secretory vesicles in the pericentrosomal region restricting anterograde secretory transport during the early phase of neuronal differentiation, thereby inhibiting neuritogenesis. This is BICD family-like cargo adapter 1 (BICDL1) from Homo sapiens (Human).